We begin with the raw amino-acid sequence, 322 residues long: Ribose-phosphate pyrophosphokinase 1 (322 aa).

ATP is bound by residues 39–41 and 98–99; these read DGE and RQ. Mg(2+) is bound by residues histidine 132 and aspartate 173. Lysine 196 is an active-site residue. D-ribose 5-phosphate is bound by residues arginine 198, aspartate 224, and 228 to 232; that span reads DTAGT.

This sequence belongs to the ribose-phosphate pyrophosphokinase family. Class I subfamily. As to quaternary structure, homohexamer. The cofactor is Mg(2+).

Its subcellular location is the cytoplasm. The catalysed reaction is D-ribose 5-phosphate + ATP = 5-phospho-alpha-D-ribose 1-diphosphate + AMP + H(+). The protein operates within metabolic intermediate biosynthesis; 5-phospho-alpha-D-ribose 1-diphosphate biosynthesis; 5-phospho-alpha-D-ribose 1-diphosphate from D-ribose 5-phosphate (route I): step 1/1. Its function is as follows. Involved in the biosynthesis of the central metabolite phospho-alpha-D-ribosyl-1-pyrophosphate (PRPP) via the transfer of pyrophosphoryl group from ATP to 1-hydroxyl of ribose-5-phosphate (Rib-5-P). The chain is Ribose-phosphate pyrophosphokinase 1 from Streptococcus agalactiae serotype III (strain NEM316).